Here is a 151-residue protein sequence, read N- to C-terminus: Ribonuclease H (151 aa).

Residues 2–143 form the RNase H type-1 domain; the sequence is SDDWVEIYTD…ADLLANRGVV (142 aa). Mg(2+) is bound by residues aspartate 11, glutamate 49, aspartate 71, and aspartate 135.

It belongs to the RNase H family. Monomer. Mg(2+) serves as cofactor.

It is found in the cytoplasm. The catalysed reaction is Endonucleolytic cleavage to 5'-phosphomonoester.. In terms of biological role, endonuclease that specifically degrades the RNA of RNA-DNA hybrids. The chain is Ribonuclease H from Stutzerimonas stutzeri (strain A1501) (Pseudomonas stutzeri).